Consider the following 680-residue polypeptide: DNA-directed RNA polymerase subunit beta' (680 aa).

Zn(2+) is bound by residues Cys69, Cys71, Cys87, and Cys90. 3 residues coordinate Mg(2+): Asp489, Asp491, and Asp493.

It belongs to the RNA polymerase beta' chain family. RpoC1 subfamily. As to quaternary structure, in plastids the minimal PEP RNA polymerase catalytic core is composed of four subunits: alpha, beta, beta', and beta''. When a (nuclear-encoded) sigma factor is associated with the core the holoenzyme is formed, which can initiate transcription. Mg(2+) is required as a cofactor. The cofactor is Zn(2+).

The protein localises to the plastid. It is found in the chloroplast. The enzyme catalyses RNA(n) + a ribonucleoside 5'-triphosphate = RNA(n+1) + diphosphate. DNA-dependent RNA polymerase catalyzes the transcription of DNA into RNA using the four ribonucleoside triphosphates as substrates. This is DNA-directed RNA polymerase subunit beta' from Draba nemorosa (Woodland whitlowgrass).